The sequence spans 263 residues: Follistatin-related protein 3 (263 aa).

The N-terminal stretch at 1 to 26 is a signal peptide; that stretch reads MRPGAPGPLWPLPWGALAWAVGFVSS. Residues 36–107 enclose the TB domain; the sequence is GVCWLQQGQE…SCDGVECGPG (72 aa). Intrachain disulfides connect C38-C61, C48-C92, C62-C95, C99-C110, C104-C119, C121-C153, C125-C146, C135-C167, C171-C182, C176-C192, C195-C229, C200-C222, and C211-C243. N73 carries N-linked (GlcNAc...) asparagine glycosylation. One can recognise a Follistatin-like 1 domain in the interval 99–119; the sequence is CDGVECGPGKACRMLGGRPRC. The region spanning 113–169 is the Kazal-like 1 domain; that stretch reads LGGRPRCECAPDCSGLPARLQVCGSDGATYRDECELRAARCRGHPDLSVMYRGRCRK. Residues 170 to 193 enclose the Follistatin-like 2 domain; the sequence is SCEHVVCPRPQSCVVDQTGSAHCV. Residues 189–245 enclose the Kazal-like 2 domain; it reads SAHCVVCRAAPCPVPSSPGQELCGNNNVTYISSCHMRQATCFLGRSIGVRHAGSCAG. N215 is a glycosylation site (N-linked (GlcNAc...) asparagine). Residues 242 to 263 form a disordered region; sequence SCAGTPEEPPGGESAEEEENFV. S255 carries the post-translational modification Phosphoserine; by FAM20C.

Interacts with INHBA and INHBB. Interacts with FN1. Interacts with ADAM12. Isoform 2 interacts with MLLT10; the interaction enhances MLLT10 in vitro transcriptional activity and self-association. Interacts with MSTN. Expressed in a wide range of tissues.

It is found in the secreted. Its subcellular location is the nucleus. Isoform 1 or the secreted form is a binding and antagonizing protein for members of the TGF-beta family, such as activin, BMP2 and MSTN. Inhibits activin A-, activin B-, BMP2- and MSDT-induced cellular signaling; more effective on activin A than on activin B. Involved in bone formation; inhibits osteoclast differentiation. Involved in hematopoiesis; involved in differentiation of hemopoietic progenitor cells, increases hematopoietic cell adhesion to fibronectin and seems to contribute to the adhesion of hematopoietic precursor cells to the bone marrow stroma. Isoform 2 or the nuclear form is probably involved in transcriptional regulation via interaction with MLLT10. The protein is Follistatin-related protein 3 (FSTL3) of Homo sapiens (Human).